A 361-amino-acid chain; its full sequence is Alcohol dehydrogenase 9 (361 aa).

8 residues coordinate Zn(2+): cysteine 51, threonine 53, histidine 73, cysteine 104, cysteine 107, cysteine 110, cysteine 118, and cysteine 167. Residues threonine 53 and histidine 73 each coordinate an alcohol. Position 53 (threonine 53) interacts with NAD(+). Residues 192-197 (GLGGLG), lysine 221, 278-280 (LGA), and lysine 356 contribute to the NAD(+) site.

The protein belongs to the zinc-containing alcohol dehydrogenase family. Class-III subfamily. As to quaternary structure, homodimer. Zn(2+) is required as a cofactor.

This is Alcohol dehydrogenase 9 from Catharanthus roseus (Madagascar periwinkle).